We begin with the raw amino-acid sequence, 554 residues long: MSLATSSSMAGGAAVVPRSATATTASAFVTMKRRATAVRAVHAAEPSKNPPVGVPSAAKTSSPSVAAPEKAPVAAAPAPVAPAPAATKQVAPARWAVDSWRTKKALQLPEYPNAAELEAVLKTIEAFPPIVFAGEARHLEERLADAAMGRAFLLQGGDCAESFKEFNGNNIRDTFRVLLQMSAVLTFGGQMPVIKVGRMAGQFAKPRSEAFEERDGVKLPSYRGDNINGDAFNEKSRIPDPQRMVRAYAQSAATLNLLRAFATGGYAAMQRVTQWNLDFTQHSEQGDRYRELAHRVDEALGFMSAAGLTVDHPLMTSTDFWTSHECLLLPYEQSLTRQDSTTGHFYDCSAHMLWVGERTRQLDGAHVEFLRGVANPLGIKVSDKMNPTELVKLIEILNPSNKPGRITIITRMGAENMRVKLPHLIRAVRHAGQIVTWITDPMHGNTIKAPCGLKTRPFDSIAEVRAFFDVHDQEGSHPGGVHLEMTGQNVTECIGGSRTVTFDDLGDRYHTHCDPRLNASQSLELSFIIAERLRRKRIRSSKLNNMLPLPPFGV.

A chloroplast-targeting transit peptide spans 1–39 (MSLATSSSMAGGAAVVPRSATATTASAFVTMKRRATAVR). The segment at 41–70 (VHAAEPSKNPPVGVPSAAKTSSPSVAAPEK) is disordered.

It belongs to the class-II DAHP synthase family.

It localises to the plastid. The protein localises to the chloroplast. The enzyme catalyses D-erythrose 4-phosphate + phosphoenolpyruvate + H2O = 7-phospho-2-dehydro-3-deoxy-D-arabino-heptonate + phosphate. Its pathway is metabolic intermediate biosynthesis; chorismate biosynthesis; chorismate from D-erythrose 4-phosphate and phosphoenolpyruvate: step 1/7. This is Phospho-2-dehydro-3-deoxyheptonate aldolase 1, chloroplastic (DAHPS1) from Oryza sativa subsp. japonica (Rice).